Reading from the N-terminus, the 99-residue chain is Aspartyl/glutamyl-tRNA(Asn/Gln) amidotransferase subunit C (99 aa).

This sequence belongs to the GatC family. As to quaternary structure, heterotrimer of A, B and C subunits.

It carries out the reaction L-glutamyl-tRNA(Gln) + L-glutamine + ATP + H2O = L-glutaminyl-tRNA(Gln) + L-glutamate + ADP + phosphate + H(+). It catalyses the reaction L-aspartyl-tRNA(Asn) + L-glutamine + ATP + H2O = L-asparaginyl-tRNA(Asn) + L-glutamate + ADP + phosphate + 2 H(+). Functionally, allows the formation of correctly charged Asn-tRNA(Asn) or Gln-tRNA(Gln) through the transamidation of misacylated Asp-tRNA(Asn) or Glu-tRNA(Gln) in organisms which lack either or both of asparaginyl-tRNA or glutaminyl-tRNA synthetases. The reaction takes place in the presence of glutamine and ATP through an activated phospho-Asp-tRNA(Asn) or phospho-Glu-tRNA(Gln). This Polaromonas naphthalenivorans (strain CJ2) protein is Aspartyl/glutamyl-tRNA(Asn/Gln) amidotransferase subunit C.